The chain runs to 393 residues: NAD(P)H-quinone oxidoreductase subunit H, chloroplastic (393 aa).

It belongs to the complex I 49 kDa subunit family. In terms of assembly, NDH is composed of at least 16 different subunits, 5 of which are encoded in the nucleus.

It localises to the plastid. The protein resides in the chloroplast thylakoid membrane. It catalyses the reaction a plastoquinone + NADH + (n+1) H(+)(in) = a plastoquinol + NAD(+) + n H(+)(out). It carries out the reaction a plastoquinone + NADPH + (n+1) H(+)(in) = a plastoquinol + NADP(+) + n H(+)(out). NDH shuttles electrons from NAD(P)H:plastoquinone, via FMN and iron-sulfur (Fe-S) centers, to quinones in the photosynthetic chain and possibly in a chloroplast respiratory chain. The immediate electron acceptor for the enzyme in this species is believed to be plastoquinone. Couples the redox reaction to proton translocation, and thus conserves the redox energy in a proton gradient. The protein is NAD(P)H-quinone oxidoreductase subunit H, chloroplastic of Saccharum hybrid (Sugarcane).